The chain runs to 472 residues: Membrane-bound acylglycerophosphatidylinositol O-acyltransferase MBOAT7 (472 aa).

Topologically, residues methionine 1 to glutamate 5 are cytoplasmic. The helical transmembrane segment at tryptophan 6–phenylalanine 22 threads the bilayer. At lysine 23–glycine 33 the chain is on the lumenal side. The chain crosses the membrane as a helical span at residues alanine 34 to isoleucine 57. The Cytoplasmic segment spans residues leucine 58–alanine 73. A helical transmembrane segment spans residues leucine 74–glycine 93. Residues leucine 94–arginine 194 are Lumenal-facing. The helical transmembrane segment at alanine 195–phenylalanine 212 threads the bilayer. Topologically, residues proline 213–leucine 231 are cytoplasmic. A helical transmembrane segment spans residues phenylalanine 232–phenylalanine 261. Residues glycine 262 to tryptophan 426 lie on the Lumenal side of the membrane. Asparagine 321 carries N-linked (GlcNAc...) asparagine glycosylation. A helical transmembrane segment spans residues alanine 427–leucine 447. Over glycine 448–glutamate 472 the chain is Cytoplasmic. Residues glycine 450 to glutamate 472 form a disordered region.

The protein belongs to the membrane-bound acyltransferase family. Interacts with SPTSSA; the interaction facilitates MBOAT7 location to mitochondria-associated membranes (MAMs).

It is found in the endoplasmic reticulum membrane. It carries out the reaction a 1-acyl-sn-glycero-3-phospho-(1D-myo-inositol) + an acyl-CoA = a 1,2-diacyl-sn-glycero-3-phospho-(1D-myo-inositol) + CoA. The catalysed reaction is a 1-acyl-sn-glycero-3-phospho-(1D-myo-inositol) + (5Z,8Z,11Z,14Z)-eicosatetraenoyl-CoA = a 1-acyl-2-(5Z,8Z,11Z,14Z-eicosatetraenoyl)-sn-glycero-3-phospho-(1D-myo-inositol) + CoA. The enzyme catalyses (5Z,8Z,11Z,14Z)-eicosatetraenoyl-CoA + 1-hexadecanoyl-sn-glycero-3-phosphocholine = 1-hexadecanoyl-2-(5Z,8Z,11Z,14Z-eicosatetraenoyl)-sn-glycero-3-phosphocholine + CoA. It catalyses the reaction 1-octadecanoyl-sn-glycero-3-phospho-(1D-myo-inositol) + (5Z,8Z,11Z,14Z)-eicosatetraenoyl-CoA = 1-octadecanoyl-2-(5Z,8Z,11Z,14Z-eicosatetraenoyl)-sn-glycero-3-phospho-(1D-myo-inositol) + CoA. It functions in the pathway lipid metabolism; phospholipid metabolism. In terms of biological role, acyltransferase which catalyzes the transfer of an acyl group from an acyl-CoA to a lysophosphatidylinositol (1-acylglycerophosphatidylinositol or LPI) leading to the production of a phosphatidylinositol (1,2-diacyl-sn-glycero-3-phosphoinositol or PI) and participates in the reacylation step of the phospholipid remodeling pathway also known as the Lands cycle. Prefers arachidonoyl-CoA as the acyl donor, thus contributing to the regulation of free levels arachidonic acid in cell. In liver, participates in the regulation of triglyceride metabolism through the phosphatidylinositol acyl-chain remodeling regulation. The sequence is that of Membrane-bound acylglycerophosphatidylinositol O-acyltransferase MBOAT7 (MBOAT7) from Bos taurus (Bovine).